A 698-amino-acid chain; its full sequence is Probable threonine--tRNA ligase 2, cytoplasmic (698 aa).

Residues 38 to 100 (GGGNIKLNDG…EMSGKDYNIE (63 aa)) enclose the TGS domain. The interval 541–560 (NNNNNNNNNNEEINDNNNNN) is disordered.

Belongs to the class-II aminoacyl-tRNA synthetase family.

It localises to the cytoplasm. The catalysed reaction is tRNA(Thr) + L-threonine + ATP = L-threonyl-tRNA(Thr) + AMP + diphosphate + H(+). This is Probable threonine--tRNA ligase 2, cytoplasmic (thrS2) from Dictyostelium discoideum (Social amoeba).